The following is a 212-amino-acid chain: Ribosomal RNA small subunit methyltransferase G (212 aa).

S-adenosyl-L-methionine-binding positions include G73, 127–128, and R143; that span reads IE.

Belongs to the methyltransferase superfamily. RNA methyltransferase RsmG family.

The protein localises to the cytoplasm. The enzyme catalyses guanosine(527) in 16S rRNA + S-adenosyl-L-methionine = N(7)-methylguanosine(527) in 16S rRNA + S-adenosyl-L-homocysteine. Its function is as follows. Specifically methylates the N7 position of guanine in position 527 of 16S rRNA. The chain is Ribosomal RNA small subunit methyltransferase G from Methylobacterium sp. (strain 4-46).